Consider the following 88-residue polypeptide: U1-hexatoxin-Iw1d (88 aa).

The signal sequence occupies residues L1–A17. The residue at position 18 (Q18) is a Pyrrolidone carboxylic acid. 5 disulfides stabilise this stretch: C20–C31, C25–C39, C30–C65, C49–C73, and C67–C80. The propeptide occupies R86–E88.

Belongs to the MIT-like AcTx family. Expressed by the venom gland.

The protein resides in the secreted. The protein is U1-hexatoxin-Iw1d of Illawarra wisharti (Illawarra funnel-web spider).